The primary structure comprises 224 residues: MNITYYGHATVGFEIDGVNVLIDPFLTSNPHTDVDPSTLRPDYLLLTHAHFDHIEDVELIAKASGATIVATHELATYYEKKGFSVHGMNIGGGHAFPFGRVTMTQAFHSSSFDMGDTPVYMGMPAGFIIETNELTVYHAGDTSLFSDMKMYGERFEIDVAFLPIGDNFTMGPTDALDAAQWLQAKRVVPIHFDTFPPIKQDAQAFCDQLHRRGLLIEPNTTIEI.

The protein belongs to the UPF0173 family.

In Exiguobacterium sp. (strain ATCC BAA-1283 / AT1b), this protein is UPF0173 metal-dependent hydrolase EAT1b_0495.